Here is a 771-residue protein sequence, read N- to C-terminus: Caldesmon (771 aa).

2 disordered regions span residues glutamate 23 to glutamate 91 and leucine 104 to lysine 599. A myosin and calmodulin-binding region spans residues serine 26 to glutamine 199. At tyrosine 27 the chain carries Phosphotyrosine. 9 stretches are compositionally biased toward basic and acidic residues: residues glutamine 47–glutamate 67, leucine 104–aspartate 115, isoleucine 139–isoleucine 155, tryptophan 170–proline 194, alanine 203–glutamate 215, alanine 240–proline 435, serine 442–threonine 484, glycine 509–glutamine 518, and aspartate 525–proline 592. 10 repeat units span residues glutamate 251–alanine 265, glutamate 266–alanine 278, glutamate 279–alanine 291, glutamate 294–alanine 306, glutamate 309–alanine 321, glutamate 324–alanine 336, glutamate 337–alanine 349, glutamate 350–alanine 362, glutamate 363–alanine 375, and glutamate 378–leucine 390. Residues glutamate 251–leucine 390 are 10 X 13 AA approximate tandem repeats. The interval glutamate 523 to lysine 580 is tropomyosin-binding. Serine 597 is subject to Phosphoserine; by CDK1. The strong actin-binding stretch occupies residues leucine 612–valine 644. Residues lysine 622–lysine 632 form a tropomyosin-binding region. Tyrosine 640 carries the post-translational modification Phosphotyrosine. The calmodulin-binding stretch occupies residues tryptophan 674–phenylalanine 680. The interval lysine 676–proline 771 is disordered. A compositionally biased stretch (polar residues) spans valine 679 to lysine 691. Serine 682 carries the phosphoserine; by CDK1 modification. Phosphothreonine; by CDK1 is present on residues threonine 688 and threonine 711. At serine 717 the chain carries Phosphoserine; by CDK1. Residues serine 723–valine 742 show a composition bias toward basic and acidic residues. Residues arginine 726–valine 752 form a weak actin-binding region.

It belongs to the caldesmon family. Post-translationally, phosphorylated in non-muscle cells. Phosphorylation by CDK1 during mitosis causes caldesmon to dissociate from microfilaments. Phosphorylation reduces caldesmon binding to actin, myosin, and calmodulin as well as its inhibition of actomyosin ATPase activity. Phosphorylation also occurs in both quiescent and dividing smooth muscle cells with similar effects on the interaction with actin and calmodulin and on microfilaments reorganization. High-molecular-weight caldesmon (h-caldesmon) is predominantly expressed in smooth muscles, whereas low-molecular-weight caldesmon (l-caldesmon) is widely distributed in non-muscle tissues and cells. Not expressed in skeletal muscle or heart.

It is found in the cytoplasm. The protein localises to the cytoskeleton. Its subcellular location is the myofibril. It localises to the stress fiber. Functionally, actin- and myosin-binding protein implicated in the regulation of actomyosin interactions in smooth muscle and nonmuscle cells (could act as a bridge between myosin and actin filaments). Stimulates actin binding of tropomyosin which increases the stabilization of actin filament structure. In muscle tissues, inhibits the actomyosin ATPase by binding to F-actin. This inhibition is attenuated by calcium-calmodulin and is potentiated by tropomyosin. Interacts with actin, myosin, two molecules of tropomyosin and with calmodulin. Also plays an essential role during cellular mitosis and receptor capping. In Gallus gallus (Chicken), this protein is Caldesmon (CALD1).